The sequence spans 170 residues: Peptide deformylase (170 aa).

Fe cation contacts are provided by Cys91 and His133. Residue Glu134 is part of the active site. Position 137 (His137) interacts with Fe cation.

It belongs to the polypeptide deformylase family. It depends on Fe(2+) as a cofactor.

It catalyses the reaction N-terminal N-formyl-L-methionyl-[peptide] + H2O = N-terminal L-methionyl-[peptide] + formate. Its function is as follows. Removes the formyl group from the N-terminal Met of newly synthesized proteins. Requires at least a dipeptide for an efficient rate of reaction. N-terminal L-methionine is a prerequisite for activity but the enzyme has broad specificity at other positions. The protein is Peptide deformylase of Yersinia pseudotuberculosis serotype O:1b (strain IP 31758).